The following is a 569-amino-acid chain: MDEEARAAGCSPAPPRAPAASCGAAAELCLCSPTGVEGIEQVPGCPCFEDAGAVVVSGEAPEGPGVLCSEDGAELKLAEQGALDVRLGSPAVGIHEQQLLHRGTSGSDEAGAINEISPVEVSPSEASSNLDTAGAIGGSPLMLESLPETSDTRGCEQEVMPGVVVGSSNRDASSEVGVESERGSDADGRNGLGEGELVSSVDGGGAEKSSKVTGVLSEEGVDGMETALEPCVASVGSITQVEEGVDRMETSLDDSEASDGSTTQDFDTDVETESSGSSIEEQDMGYGVHIPHTEQAICEVARGNKSSEVKSSDRMSSVTLPTLILASGAAMLPHPSKVLTGGEDAYFIACDGWFGVADGVGQWSFEGINAGLYARELMDGCKKAVMESQGAPEMRTEEVLAKAADEARSPGSSTVLVAHFDGQVLHACNIGDSGFLVIRNGEIYQKSKPMTYGFNFPLQIEKGDDPFKLVQKYTIDLQEGDAIVTATDGLFDNVYEEEIAAVISKSLEAGLKPSEIAEFLVARAKEVGRSATCRSPFSDAALAVGYLGYSGGKLDDVTVVVSVVRKSEV.

Disordered regions lie at residues 120–214 (EVSP…KVTG) and 251–279 (SLDDSEASDGSTTQDFDTDVETESSGSSI). Residues 179 to 188 (ESERGSDADG) are compositionally biased toward basic and acidic residues. Residues 329–564 (AAMLPHPSKV…DDVTVVVSVV (236 aa)) form the PPM-type phosphatase domain. Residues Asp-358, Gly-359, Asp-488, and Asp-555 each contribute to the Mn(2+) site.

Belongs to the PP2C family. Mg(2+) is required as a cofactor. Requires Mn(2+) as cofactor.

It catalyses the reaction O-phospho-L-seryl-[protein] + H2O = L-seryl-[protein] + phosphate. The enzyme catalyses O-phospho-L-threonyl-[protein] + H2O = L-threonyl-[protein] + phosphate. Functionally, may play a role in responses to biotic and abiotic stresses. This Oryza sativa subsp. japonica (Rice) protein is Probable protein phosphatase 2C BIPP2C1 (BIPP2C1).